A 276-amino-acid chain; its full sequence is Pantothenate synthetase (276 aa).

27-34 is an ATP binding site; it reads MGNLHDGH. His-34 acts as the Proton donor in catalysis. Gln-58 contacts (R)-pantoate. Gln-58 provides a ligand contact to beta-alanine. Position 145-148 (145-148) interacts with ATP; that stretch reads GKKD. Residue Gln-151 participates in (R)-pantoate binding. Residues Ile-174 and 182–185 contribute to the ATP site; that span reads LSSR.

It belongs to the pantothenate synthetase family. Homodimer.

It localises to the cytoplasm. The catalysed reaction is (R)-pantoate + beta-alanine + ATP = (R)-pantothenate + AMP + diphosphate + H(+). The protein operates within cofactor biosynthesis; (R)-pantothenate biosynthesis; (R)-pantothenate from (R)-pantoate and beta-alanine: step 1/1. Its function is as follows. Catalyzes the condensation of pantoate with beta-alanine in an ATP-dependent reaction via a pantoyl-adenylate intermediate. This Aromatoleum aromaticum (strain DSM 19018 / LMG 30748 / EbN1) (Azoarcus sp. (strain EbN1)) protein is Pantothenate synthetase.